The following is a 603-amino-acid chain: DNA mismatch repair protein MutL (603 aa).

Residues 336-346 (EVSKKQKEQQK) are compositionally biased toward basic and acidic residues. The disordered stretch occupies residues 336-372 (EVSKKQKEQQKSEQIQMSFEENRQPKEPPTLFSKPNI).

It belongs to the DNA mismatch repair MutL/HexB family.

This protein is involved in the repair of mismatches in DNA. It is required for dam-dependent methyl-directed DNA mismatch repair. May act as a 'molecular matchmaker', a protein that promotes the formation of a stable complex between two or more DNA-binding proteins in an ATP-dependent manner without itself being part of a final effector complex. The chain is DNA mismatch repair protein MutL from Listeria innocua serovar 6a (strain ATCC BAA-680 / CLIP 11262).